Here is a 201-residue protein sequence, read N- to C-terminus: Large ribosomal subunit protein uL4 (201 aa).

Residues 45–71 (AQKTRAEVTGSGKKPWRQKGTGRARAG) form a disordered region.

The protein belongs to the universal ribosomal protein uL4 family. In terms of assembly, part of the 50S ribosomal subunit.

Its function is as follows. One of the primary rRNA binding proteins, this protein initially binds near the 5'-end of the 23S rRNA. It is important during the early stages of 50S assembly. It makes multiple contacts with different domains of the 23S rRNA in the assembled 50S subunit and ribosome. Forms part of the polypeptide exit tunnel. The chain is Large ribosomal subunit protein uL4 from Shewanella sp. (strain MR-4).